The primary structure comprises 285 residues: Urease accessory protein UreD 1 (285 aa).

The protein belongs to the UreD family. As to quaternary structure, ureD, UreF and UreG form a complex that acts as a GTP-hydrolysis-dependent molecular chaperone, activating the urease apoprotein by helping to assemble the nickel containing metallocenter of UreC. The UreE protein probably delivers the nickel.

It is found in the cytoplasm. Functionally, required for maturation of urease via the functional incorporation of the urease nickel metallocenter. The polypeptide is Urease accessory protein UreD 1 (Pseudomonas syringae pv. syringae (strain B728a)).